Here is a 2408-residue protein sequence, read N- to C-terminus: MQNLEAQVTGSLVAFPDVTQKALKEDEINLDSVLRGKFSTGRTSLAWLACGPQLEITNSVTGERISAYHFSGLTERPPVVVAVKEFTWQKKTGLLVGLVEAEGSVLCLYDIGISKVVKAVVLPGSVTAVEPIINHGGASASTQHLHQSLRWFFGVTAVVTDVGHVLLIDLCLDEVSSNQDELDASDLEVMSVIPTKIPKLREAATRERRHLCLQLAAPTGTTVSCLSYISRTNQLAVGYSDGYFSLWNMKTLRRDYHVQIEGGRVPVCAVAFQEPENDPRNCCYLWAVQSSESGGDVSLHLLQLAFSDRKCLASGQIMYELLEYCEERYSLDLSGSTLSLRGQSNNTKLLGCQTIEKFRVHGEREDGVHEVTSPDTSVSVFSWQVNTYGQGKPSVYLGVFDINRWYQAQMPDSLRSGQFLRNCSYFAFWSLEAVVNITTQDIIFDILVHERSLSRGIPPSYPPPEQFYYPSTYNFDATCLLNSGLIHFACTGFQKETLHFLKKSGSSLNEAIPDGYNRCLAAGLLAPKFTDVQASSLSQEEQLQAILAAAVETSSLGLLTSCIKRWTAEEQPRSAANLRFVLEWTWKKVTLTKQEFDRLCFRLFDGSCNFIDPHTLQSLQQCHLYFSNLTAVLNCFIAQAKEVTQQGAVDLTNKQSVTRLLTLYASVVLWFCRSGMLPDSSDETVQLTRPFYNYQVIQQYYSDQRKKLERLARGKWDTSSLMIDGLINQFGDRIQQLWSRDDNGTGKYPPANLHALLDVYLLENADEMSKHAITIYFLLDIMYSFPDKPDSSIESFPTAFFVPGSLIKLIQGFWLLDHNDYQNSVDCILNPASSRVMSWQHSQIIENLLCHGDSRQALRYLQVMKPVATTSKEVKLHMTVLLANRSILEAWNLQRLHSSRLNVEELLKHMYEMCQEMGLIEELLKLTFTDFEQGYLHKFLQTTGVQNQELLLVHHLQRANYISALQLNQSLKTNHLNDCDRRLRERSGARNAILDQYGKILPRVQRTLASERAKPYSLPSLVWREVARPKPLSTTAKQAAPGSIITKANFICNVLSKIKEVSTANEKREEYSPYQSMVSEEPTAPPLQDIDVPDAFFGTPINKSRRVSRLLDSVVHPVLMEPTPLTSSDTDNNQTPHKSPLLKTSSPLHSSLRRIAHMRSFAKASEFSLLETPLVVRKAKALAANTASSGYTSITPQSILRSSVRTTPLVSPSVSPGRSLTPPLRPKETKISFMELSFTRHAKAAHSSEGNLLAISPVLRSSPDAVWSVKGKVASFTQNTPVKKLDEIDASSSGIQEESQDEMEVSKEISNISVRSEQASLEYHDAPTPEDLENDEISGTTNSQPQVNEVHHQMEDGQLTEKPAELALTEMQEEFIDSEEREIEYISAPLNGPNALECMTAVPDIYLEDASQCILETPEGSSVSVTGEQECVSSAKDSESVISIHDSDDAHSNLSENDQDSEEIEENNLRVPTTVTRCEEFDLIETKDLEVELEEADSEKTNYKDIYPDATVQLGFTVESIEQRYTCELADRRETPSETDEIEGEHFETENNFSLVLEGDVTEEEILEPSSSKTDLELTRPPIAHQKLISENRENIENCETTEKIPANMSPLVDSDHESKTLETLPSEADLSVAEKVLKGTEEKDVPPEVHSEVVLESKLVGNAMMSLDSSESQEVIISQYDNVISIEKLEMTQEKMYGEKTEQINEGQVSPNRDQSTLVKPLTPRRSIRKSSKPADSSTDIIGNITLPTTPKRGLKKAKENVDTLKNSISVVPEEELTLGTRRITRKATLTALDNPEPLQIKEPPSGEDLQVQPSTPTRGRRGKVITSDDLKEPPSGEDLQVQPSTPTRGRRGRVITSDDLREPPPGEDLQVQPSTPTRGRRGRVITSDDIKESPSVEDLQVQPSTPTRGRRGKVITSDDIKEPPSVEDLQVQPSTPTRGRKGKVITSDDIKEPLSGEDLQVQPSTPTRGRKGKVITSDDIKEPLSEEVLQEQPSTPTRGRRGRVITSDGKGYECVEEKNALPLTPTRITRSKNILEPEKGISQIEPEKGISQIEPDKGLSQIEDTGETEHEVVTPRRGRRGKRVVNELVKHFERNSSQPNIKADTSPPVSPKKVSLRWTRTRSENQRINATEEQASKIQEDLSDTPRKRYKKSSNKMGFEETTDTVTEGAIVEDVQESLIISHLGKNPNTSIVRSARKTALPPVTEDHSEQPLLPPESHSKVHSSLAIADEENKTNTRTRSGNKSSVDVSAITFEFSTPKARTKKTAKGSAVPTELIPSTQYVFSPPSTRTRRATRANVSEAVIEPQLQFQESCEIAETEVPEVPASKPRGRPPKHKAKAVTRVLKKPSWSTPPVEIKLISPPESPAVSETNTKTDSTEAKGAEKISVRRTRRRIIAKPVTRRKMR.

Residues 1-492 (MQNLEAQVTG…SGLIHFACTG (492 aa)) are seven-bladed beta propeller repeats. A disordered region spans residues 1016–2408 (YSLPSLVWRE…AKPVTRRKMR (1393 aa)). Residues 1124–1145 (PLTSSDTDNNQTPHKSPLLKTS) show a composition bias toward polar residues. The span at 1457 to 1466 (NDQDSEEIEE) shows a compositional bias: acidic residues. 2 stretches are compositionally biased toward polar residues: residues 1705–1719 (INEG…QSTL) and 1735–1750 (PADS…TLPT). A compositionally biased stretch (basic and acidic residues) spans 2136–2149 (QASKIQEDLSDTPR). Sufficient for chromatin-binding regions lie at residues 2281–2359 (STQY…PVEI) and 2359–2408 (IKLI…RKMR). Residues 2281-2408 (STQYVFSPPS…AKPVTRRKMR (128 aa)) are sufficient to block nuclear pore assembly. A DNA-binding region (a.T hook) is located at residues 2329 to 2341 (SKPRGRPPKHKAK). The segment covering 2331-2348 (PRGRPPKHKAKAVTRVLK) has biased composition (basic residues). Positions 2378 to 2389 (DSTEAKGAEKIS) are enriched in basic and acidic residues.

This sequence belongs to the ELYS family. In terms of assembly, interacts with the Nup107-160 subcomplex of the NPC.

It localises to the nucleus. The protein resides in the nuclear pore complex. The protein localises to the cytoplasm. Its subcellular location is the nucleoplasm. Functionally, required for the assembly of a functional nuclear pore complex (NPC) on the surface of chromosomes as nuclei form at the end of mitosis. May initiate NPC assembly by binding to chromatin and recruiting the Nup107-160 subcomplex, which may in turn recruit membrane vesicles containing pom121 and tmem48/ndc1. Association with chromatin may require the presence of the mcm2-mcm7 complex, suggesting a mechanism for coordination of nuclear assembly and the inactivation of replication licensing. The polypeptide is Protein ELYS (ahctf1) (Xenopus laevis (African clawed frog)).